The primary structure comprises 317 residues: ATP synthase gamma chain (317 aa).

Belongs to the ATPase gamma chain family. F-type ATPases have 2 components, CF(1) - the catalytic core - and CF(0) - the membrane proton channel. CF(1) has five subunits: alpha(3), beta(3), gamma(1), delta(1), epsilon(1). CF(0) has three main subunits: a, b and c.

Its subcellular location is the cellular thylakoid membrane. In terms of biological role, produces ATP from ADP in the presence of a proton gradient across the membrane. The gamma chain is believed to be important in regulating ATPase activity and the flow of protons through the CF(0) complex. This Synechococcus sp. (strain CC9311) protein is ATP synthase gamma chain.